A 396-amino-acid chain; its full sequence is Ribosomal RNA large subunit methyltransferase I (396 aa).

The PUA domain occupies 2-81; that stretch reads SVRLVLAKGR…ESIDIAFFTR (80 aa).

It belongs to the methyltransferase superfamily. RlmI family.

Its subcellular location is the cytoplasm. The catalysed reaction is cytidine(1962) in 23S rRNA + S-adenosyl-L-methionine = 5-methylcytidine(1962) in 23S rRNA + S-adenosyl-L-homocysteine + H(+). Its function is as follows. Specifically methylates the cytosine at position 1962 (m5C1962) of 23S rRNA. The chain is Ribosomal RNA large subunit methyltransferase I from Escherichia coli O1:K1 / APEC.